A 334-amino-acid polypeptide reads, in one-letter code: Holliday junction branch migration complex subunit RuvB (334 aa).

The segment at Ala4–Tyr184 is large ATPase domain (RuvB-L). ATP contacts are provided by residues Ile23, Arg24, Gly65, Lys68, Thr69, Thr70, Glu131–Tyr133, Arg174, Tyr184, and Arg221. Residue Thr69 coordinates Mg(2+). The interval Gln185–Asn255 is small ATPAse domain (RuvB-S). The segment at Ala258–Glu334 is head domain (RuvB-H). The DNA site is built by Arg294, Arg313, and Arg318.

Belongs to the RuvB family. Homohexamer. Forms an RuvA(8)-RuvB(12)-Holliday junction (HJ) complex. HJ DNA is sandwiched between 2 RuvA tetramers; dsDNA enters through RuvA and exits via RuvB. An RuvB hexamer assembles on each DNA strand where it exits the tetramer. Each RuvB hexamer is contacted by two RuvA subunits (via domain III) on 2 adjacent RuvB subunits; this complex drives branch migration. In the full resolvosome a probable DNA-RuvA(4)-RuvB(12)-RuvC(2) complex forms which resolves the HJ.

It localises to the cytoplasm. It catalyses the reaction ATP + H2O = ADP + phosphate + H(+). Its function is as follows. The RuvA-RuvB-RuvC complex processes Holliday junction (HJ) DNA during genetic recombination and DNA repair, while the RuvA-RuvB complex plays an important role in the rescue of blocked DNA replication forks via replication fork reversal (RFR). RuvA specifically binds to HJ cruciform DNA, conferring on it an open structure. The RuvB hexamer acts as an ATP-dependent pump, pulling dsDNA into and through the RuvAB complex. RuvB forms 2 homohexamers on either side of HJ DNA bound by 1 or 2 RuvA tetramers; 4 subunits per hexamer contact DNA at a time. Coordinated motions by a converter formed by DNA-disengaged RuvB subunits stimulates ATP hydrolysis and nucleotide exchange. Immobilization of the converter enables RuvB to convert the ATP-contained energy into a lever motion, pulling 2 nucleotides of DNA out of the RuvA tetramer per ATP hydrolyzed, thus driving DNA branch migration. The RuvB motors rotate together with the DNA substrate, which together with the progressing nucleotide cycle form the mechanistic basis for DNA recombination by continuous HJ branch migration. Branch migration allows RuvC to scan DNA until it finds its consensus sequence, where it cleaves and resolves cruciform DNA. This is Holliday junction branch migration complex subunit RuvB from Yersinia pseudotuberculosis serotype O:1b (strain IP 31758).